The primary structure comprises 383 residues: Ribosomal RNA large subunit methyltransferase G (383 aa).

This sequence belongs to the methyltransferase superfamily. RlmG family.

It is found in the cytoplasm. The catalysed reaction is guanosine(1835) in 23S rRNA + S-adenosyl-L-methionine = N(2)-methylguanosine(1835) in 23S rRNA + S-adenosyl-L-homocysteine + H(+). Specifically methylates the guanine in position 1835 (m2G1835) of 23S rRNA. The protein is Ribosomal RNA large subunit methyltransferase G of Vibrio atlanticus (strain LGP32) (Vibrio splendidus (strain Mel32)).